The chain runs to 331 residues: FMRFamide-related neuropeptides (331 aa).

An N-terminal signal peptide occupies residues 1-25 (MRCWSPCSLLVVIVIYCLSSHTSEA). A propeptide spanning residues 26–65 (FDLAQACVESQRLSLLPICDTIFAVQQEGVQQSADDGMRS) is cleaved from the precursor. Phe-71 and Phe-83 each carry phenylalanine amide. Positions 86–94 (NVPDLPFED) are excised as a propeptide. Phe-100 is modified (phenylalanine amide). A propeptide spanning residues 103–168 (AAPQLDELLK…YIDDVEDSDV (66 aa)) is cleaved from the precursor. The segment at 122–158 (QKADETSVRRKRSTDAAPQNNAENPEQKNDSAKITKR) is disordered. Positions 146–158 (PEQKNDSAKITKR) are enriched in basic and acidic residues. Residues Phe-174 and Phe-181 each carry the phenylalanine amide modification. Residues 184–194 (NPSDVGNKLTE) constitute a propeptide that is removed on maturation. A Phenylalanine amide modification is found at Phe-200. A propeptide spanning residues 203 to 205 (DPE) is cleaved from the precursor. A Phenylalanine amide modification is found at Phe-211. A propeptide spanning residues 214-216 (SDD) is cleaved from the precursor. Phenylalanine amide is present on Phe-222. Positions 225 to 236 (NPSDAEDELEED) are excised as a propeptide. Phe-242 carries the phenylalanine amide modification. Residues 245–254 (GGEDDEEEAE) constitute a propeptide that is removed on maturation. Residue Phe-260 is modified to Phenylalanine amide. Residues 263-265 (DPE) constitute a propeptide that is removed on maturation. Phenylalanine amide is present on Phe-271. Positions 274-277 (SGED) are excised as a propeptide. Residues 279-296 (RFMRFGRNPDEQEADKRF) show a composition bias toward basic and acidic residues. Residues 279-310 (RFMRFGRNPDEQEADKRFMRFGRGGEDDEVST) are disordered. Phe-283 bears the Phenylalanine amide mark. A propeptide spanning residues 286-293 (NPDEQEAD) is cleaved from the precursor. Phenylalanine amide is present on Phe-299. A propeptide spanning residues 302 to 312 (GGEDDEVSTED) is cleaved from the precursor. Position 318 is a phenylalanine amide (Phe-318). The propeptide occupies 321–331 (SADKCKGCLEG).

The protein belongs to the FARP (FMRFamide related peptide) family.

It is found in the secreted. Its function is as follows. Excitatory neurotransmitters that directly modulate chromatophore function by activating chromatophore expansion at the chromatophore neuromuscular junction. The protein is FMRFamide-related neuropeptides of Doryteuthis opalescens (California market squid).